The sequence spans 217 residues: Holliday junction branch migration complex subunit RuvA (217 aa).

The interval 1–64 is domain I; the sequence is MIGKLTGILD…EDAIRLFGFE (64 aa). Residues 65–145 form a domain II region; the sequence is TKVEQDWFCL…NAPHQSMPHF (81 aa). Positions 146–160 are flexible linker; it reads VSYSSETSSQAGTQH. Residues 161 to 217 form a domain III region; the sequence is TGHQHSMDALAALTKLGFERDQATHALQEAIKAFEGETPSSALLIRHSLKLLSSHLK.

It belongs to the RuvA family. As to quaternary structure, homotetramer. Forms an RuvA(8)-RuvB(12)-Holliday junction (HJ) complex. HJ DNA is sandwiched between 2 RuvA tetramers; dsDNA enters through RuvA and exits via RuvB. An RuvB hexamer assembles on each DNA strand where it exits the tetramer. Each RuvB hexamer is contacted by two RuvA subunits (via domain III) on 2 adjacent RuvB subunits; this complex drives branch migration. In the full resolvosome a probable DNA-RuvA(4)-RuvB(12)-RuvC(2) complex forms which resolves the HJ.

The protein resides in the cytoplasm. Its function is as follows. The RuvA-RuvB-RuvC complex processes Holliday junction (HJ) DNA during genetic recombination and DNA repair, while the RuvA-RuvB complex plays an important role in the rescue of blocked DNA replication forks via replication fork reversal (RFR). RuvA specifically binds to HJ cruciform DNA, conferring on it an open structure. The RuvB hexamer acts as an ATP-dependent pump, pulling dsDNA into and through the RuvAB complex. HJ branch migration allows RuvC to scan DNA until it finds its consensus sequence, where it cleaves and resolves the cruciform DNA. The sequence is that of Holliday junction branch migration complex subunit RuvA from Bartonella bacilliformis (strain ATCC 35685 / KC583 / Herrer 020/F12,63).